A 500-amino-acid chain; its full sequence is Proline/betaine transporter (500 aa).

Over 1–37 (MLKRKKIKPITLGDVTIIDDGKLRKAITAASLGNAME) the chain is Cytoplasmic. A helical transmembrane segment spans residues 38 to 58 (WFDFGVYGFVAYALGKVFFPG). The Periplasmic portion of the chain corresponds to 59-65 (ADPSVQM). Residues 66 to 86 (IAALATFSVPFLIRPLGGLFF) form a helical membrane-spanning segment. At 87–97 (GMLGDKYGRQK) the chain is on the cytoplasmic side. Residues 98-118 (ILAITIVIMSISTFCIGLIPS) traverse the membrane as a helical segment. At 119 to 121 (YAT) the chain is on the periplasmic side. A helical transmembrane segment spans residues 122–142 (IGIWAPILLLLCKMAQGFSVG). At 143–169 (GEYTGASIFVAEYSPDRKRGFMGSWLD) the chain is on the cytoplasmic side. A helical transmembrane segment spans residues 170 to 190 (FGSIAGFVLGAGVVVLISTIV). Over 191–194 (GEEN) the chain is Periplasmic. Residues 195–215 (FLEWGWRIPFFIALPLGIIGL) traverse the membrane as a helical segment. Residues 216–260 (YLRHALEETPAFQQHVDKLEQGDREGLQDGPKVSFKEIATKHWRS) lie on the Cytoplasmic side of the membrane. The chain crosses the membrane as a helical span at residues 261–281 (LLSCIGLVIATNVTYYMLLTY). At 282–297 (MPSYLSHNLHYSEDHG) the chain is on the periplasmic side. A helical membrane pass occupies residues 298–318 (VLIIIAIMIGMLFVQPVMGLL). Residues 319–325 (SDRFGRR) are Cytoplasmic-facing. A helical membrane pass occupies residues 326–346 (PFVIMGSIALFALAIPAFILI). The Periplasmic portion of the chain corresponds to 347–350 (NSNV). A helical membrane pass occupies residues 351–371 (IGLIFAGLLMLAVILNCFTGV). At 372 to 390 (MASTLPAMFPTHIRYSALA) the chain is on the cytoplasmic side. A helical membrane pass occupies residues 391-411 (AAFNISVLIAGLTPTLAAWLV). Topologically, residues 412–416 (ESSQD) are periplasmic. Residues 417-437 (LMMPAYYLMVIAVIGLITGIS) traverse the membrane as a helical segment. Residues 438-500 (MKETANRPLK…LVQQHPRIDE (63 aa)) are Cytoplasmic-facing. Positions 453–498 (ASDIQEAKEILGEHYDNIEQKIDDIDQEIAELQVKRSRLVQQHPRI) form a coiled coil.

Belongs to the major facilitator superfamily. Metabolite:H+ Symporter (MHS) family (TC 2.A.1.6) family.

The protein resides in the cell inner membrane. In terms of biological role, proton symporter that senses osmotic shifts and responds by importing osmolytes such as proline, glycine betaine, stachydrine, pipecolic acid, ectoine and taurine. It is both an osmosensor and an osmoregulator which is available to participate early in the bacterial osmoregulatory response. The polypeptide is Proline/betaine transporter (proP) (Salmonella typhimurium (strain LT2 / SGSC1412 / ATCC 700720)).